Reading from the N-terminus, the 349-residue chain is Anthranilate phosphoribosyltransferase (349 aa).

5-phospho-alpha-D-ribose 1-diphosphate is bound by residues Gly-82, Gly-85–Asp-86, Asn-92–Thr-95, Lys-110–Gly-118, and Ser-122. Gly-82 is an anthranilate binding site. Ser-94 contributes to the Mg(2+) binding site. Asn-113 contributes to the anthranilate binding site. Arg-168 contacts anthranilate. Residues Asp-227 and Glu-228 each contribute to the Mg(2+) site.

It belongs to the anthranilate phosphoribosyltransferase family. Homodimer. Mg(2+) is required as a cofactor.

It carries out the reaction N-(5-phospho-beta-D-ribosyl)anthranilate + diphosphate = 5-phospho-alpha-D-ribose 1-diphosphate + anthranilate. Its pathway is amino-acid biosynthesis; L-tryptophan biosynthesis; L-tryptophan from chorismate: step 2/5. In terms of biological role, catalyzes the transfer of the phosphoribosyl group of 5-phosphorylribose-1-pyrophosphate (PRPP) to anthranilate to yield N-(5'-phosphoribosyl)-anthranilate (PRA). This is Anthranilate phosphoribosyltransferase from Pseudomonas savastanoi pv. phaseolicola (strain 1448A / Race 6) (Pseudomonas syringae pv. phaseolicola (strain 1448A / Race 6)).